A 275-amino-acid polypeptide reads, in one-letter code: NH(3)-dependent NAD(+) synthetase (275 aa).

47 to 54 (GISGGQDS) serves as a coordination point for ATP. D53 lines the Mg(2+) pocket. R141 lines the deamido-NAD(+) pocket. Residue T161 coordinates ATP. Position 166 (E166) interacts with Mg(2+). Deamido-NAD(+) contacts are provided by K174 and D181. The ATP site is built by K190 and T212. Deamido-NAD(+) is bound at residue 261–262 (HK).

The protein belongs to the NAD synthetase family. In terms of assembly, homodimer.

It carries out the reaction deamido-NAD(+) + NH4(+) + ATP = AMP + diphosphate + NAD(+) + H(+). The protein operates within cofactor biosynthesis; NAD(+) biosynthesis; NAD(+) from deamido-NAD(+) (ammonia route): step 1/1. Functionally, catalyzes the ATP-dependent amidation of deamido-NAD to form NAD. Uses ammonia as a nitrogen source. This Latilactobacillus sakei subsp. sakei (strain 23K) (Lactobacillus sakei subsp. sakei) protein is NH(3)-dependent NAD(+) synthetase.